We begin with the raw amino-acid sequence, 162 residues long: MNTLRSYIKSFLLWELLLGLKLTGRYLFTKKVTVQFPEERTPQSPRFRGLHALRRYPNGEERCIACKLCEAVCPALAITIDSEQREDGTRRTTRYDIDLFKCIYCGFCEESCPVDSIVETRILDYHFEERGEHILHKEQLLALGDKYEAQIAADRAADAPYR.

4Fe-4S ferredoxin-type domains follow at residues 53–83 (LRRYPNGEERCIACKLCEAVCPALAITIDSE) and 93–122 (TRYDIDLFKCIYCGFCEESCPVDSIVETRI). The [4Fe-4S] cluster site is built by Cys63, Cys66, Cys69, Cys73, Cys102, Cys105, Cys108, and Cys112.

The protein belongs to the complex I 23 kDa subunit family. In terms of assembly, NDH-1 is composed of 14 different subunits. Subunits NuoA, H, J, K, L, M, N constitute the membrane sector of the complex. Requires [4Fe-4S] cluster as cofactor.

The protein localises to the cell inner membrane. The catalysed reaction is a quinone + NADH + 5 H(+)(in) = a quinol + NAD(+) + 4 H(+)(out). NDH-1 shuttles electrons from NADH, via FMN and iron-sulfur (Fe-S) centers, to quinones in the respiratory chain. The immediate electron acceptor for the enzyme in this species is believed to be ubiquinone. Couples the redox reaction to proton translocation (for every two electrons transferred, four hydrogen ions are translocated across the cytoplasmic membrane), and thus conserves the redox energy in a proton gradient. The protein is NADH-quinone oxidoreductase subunit I 2 of Nitrosococcus oceani (strain ATCC 19707 / BCRC 17464 / JCM 30415 / NCIMB 11848 / C-107).